Consider the following 505-residue polypeptide: Lysine--tRNA ligase (505 aa).

Glu-415 and Glu-422 together coordinate Mg(2+).

It belongs to the class-II aminoacyl-tRNA synthetase family. In terms of assembly, homodimer. The cofactor is Mg(2+).

Its subcellular location is the cytoplasm. It catalyses the reaction tRNA(Lys) + L-lysine + ATP = L-lysyl-tRNA(Lys) + AMP + diphosphate. The chain is Lysine--tRNA ligase from Shigella dysenteriae serotype 1 (strain Sd197).